We begin with the raw amino-acid sequence, 90 residues long: Small ribosomal subunit protein uS15 (90 aa).

It belongs to the universal ribosomal protein uS15 family. Part of the 30S ribosomal subunit. Forms a bridge to the 50S subunit in the 70S ribosome, contacting the 23S rRNA.

In terms of biological role, one of the primary rRNA binding proteins, it binds directly to 16S rRNA where it helps nucleate assembly of the platform of the 30S subunit by binding and bridging several RNA helices of the 16S rRNA. Forms an intersubunit bridge (bridge B4) with the 23S rRNA of the 50S subunit in the ribosome. The chain is Small ribosomal subunit protein uS15 from Wolbachia pipientis subsp. Culex pipiens (strain wPip).